The sequence spans 375 residues: CD2 homolog (375 aa).

Residues 1–16 (MIIILIFLIIPNIVLS) form the signal peptide. Residues 17–207 (IDYWVSFNKT…YLDFFQVASY (191 aa)) lie on the Extracellular side of the membrane. N24, N80, N105, N122, N134, N145, N168, N176, and N183 each carry an N-linked (GlcNAc...) asparagine; by host glycan. Cystine bridges form between C123–C190 and C130–C173. The chain crosses the membrane as a helical span at residues 208–228 (MFYMIIFIATGIIASIFISII). The Cytoplasmic portion of the chain corresponds to 229–375 (TFLSLRKRKK…ISLIHVDRII (147 aa)). A disordered region spans residues 242 to 278 (EIESPSPSESNEEEQCQHDDTTSIHEPSPREPLLPKP). The span at 256-270 (QCQHDDTTSIHEPSP) shows a compositional bias: basic and acidic residues. A run of 5 repeats spans residues 305 to 310 (KLCPPP), 311 to 316 (KPCPPP), 317 to 322 (KPCPPP), 323 to 328 (KPCPPP), and 329 to 334 (KPCPSS). The segment at 305–334 (KLCPPPKPCPPPKPCPPPKPCPPPKPCPSS) is 5 X 6 AA tandem repeats of K-[LP]-C-[PRS]-[PS]-[PS]. The disordered stretch occupies residues 323–350 (KPCPPPKPCPSSESCSPPESYSLPKPLP). A compositionally biased stretch (low complexity) spans 332–346 (PSSESCSPPESYSLP).

The protein belongs to the asfivirus CD2 homolog protein family. Both glycosylated and nonglycosylated forms interact (via C-terminus) with the host AP-1 complex. In terms of processing, cleaved into two fragments of 63 kDa and 26 kDa containing respectively the glycosylated N-terminus and the nonglycosylated C-terminus. A full-length 89-kDa glycosylated form also exists.

The protein resides in the host membrane. The protein localises to the virion membrane. Its subcellular location is the host Golgi apparatus. May play an immunosuppressive role by inhibiting lymphocyte proliferation and subsequently facilitating viral replication and generalization of infection. Responsible for viral hemadsorption, which may help viral spread. Increases virus replication in the tick vector at the step of virus uptake or replication in the tick gut. May play a role in the host Golgi reorganization to yield viral factories. May play a role in host cell penetration. The polypeptide is CD2 homolog (Ornithodoros (relapsing fever ticks)).